Here is a 470-residue protein sequence, read N- to C-terminus: ATP synthase subunit beta (470 aa).

158 to 165 (GGAGVGKT) is an ATP binding site.

This sequence belongs to the ATPase alpha/beta chains family. F-type ATPases have 2 components, CF(1) - the catalytic core - and CF(0) - the membrane proton channel. CF(1) has five subunits: alpha(3), beta(3), gamma(1), delta(1), epsilon(1). CF(0) has three main subunits: a(1), b(2) and c(9-12). The alpha and beta chains form an alternating ring which encloses part of the gamma chain. CF(1) is attached to CF(0) by a central stalk formed by the gamma and epsilon chains, while a peripheral stalk is formed by the delta and b chains.

It localises to the cell membrane. It carries out the reaction ATP + H2O + 4 H(+)(in) = ADP + phosphate + 5 H(+)(out). Produces ATP from ADP in the presence of a proton gradient across the membrane. The catalytic sites are hosted primarily by the beta subunits. This is ATP synthase subunit beta from Halalkalibacterium halodurans (strain ATCC BAA-125 / DSM 18197 / FERM 7344 / JCM 9153 / C-125) (Bacillus halodurans).